The primary structure comprises 164 residues: HTH-type transcriptional regulator IscR (164 aa).

One can recognise an HTH rrf2-type domain in the interval 2-131; that stretch reads RLTSKGRYAV…SSISLEELVN (130 aa). The H-T-H motif DNA-binding region spans 28-51; sequence LADISERQGISLSYLEQLFSRLRK. [2Fe-2S] cluster-binding residues include C92, C98, and C104. The interval 141-164 is disordered; the sequence is RQDNDKRRAPNGRAQETINVNLRP. Residues 154-164 show a composition bias toward polar residues; the sequence is AQETINVNLRP.

It depends on [2Fe-2S] cluster as a cofactor.

In terms of biological role, regulates the transcription of several operons and genes involved in the biogenesis of Fe-S clusters and Fe-S-containing proteins. The sequence is that of HTH-type transcriptional regulator IscR from Photorhabdus laumondii subsp. laumondii (strain DSM 15139 / CIP 105565 / TT01) (Photorhabdus luminescens subsp. laumondii).